The following is a 153-amino-acid chain: Large ribosomal subunit protein bL9 (153 aa).

It belongs to the bacterial ribosomal protein bL9 family.

Its function is as follows. Binds to the 23S rRNA. This Koribacter versatilis (strain Ellin345) protein is Large ribosomal subunit protein bL9.